The following is a 426-amino-acid chain: 3-phosphoshikimate 1-carboxyvinyltransferase (426 aa).

Positions 21, 22, and 26 each coordinate 3-phosphoshikimate. K21 contributes to the phosphoenolpyruvate binding site. Phosphoenolpyruvate contacts are provided by G92 and R122. 3-phosphoshikimate is bound by residues S167, S168, Q169, S195, D315, and K342. Q169 is a phosphoenolpyruvate binding site. D315 (proton acceptor) is an active-site residue. Phosphoenolpyruvate-binding residues include R346 and R386.

It belongs to the EPSP synthase family. In terms of assembly, monomer.

It is found in the cytoplasm. The enzyme catalyses 3-phosphoshikimate + phosphoenolpyruvate = 5-O-(1-carboxyvinyl)-3-phosphoshikimate + phosphate. The protein operates within metabolic intermediate biosynthesis; chorismate biosynthesis. Its function is as follows. Catalyzes the transfer of the enolpyruvyl moiety of phosphoenolpyruvate (PEP) to the 5-hydroxyl of shikimate-3-phosphate (S3P) to produce enolpyruvyl shikimate-3-phosphate and inorganic phosphate. The polypeptide is 3-phosphoshikimate 1-carboxyvinyltransferase (Methanosphaera stadtmanae (strain ATCC 43021 / DSM 3091 / JCM 11832 / MCB-3)).